Reading from the N-terminus, the 387-residue chain is Protein ERD1 homolog 2 (387 aa).

Helical transmembrane passes span 20 to 40 (IGLL…LIYI), 92 to 112 (AGYC…ILFL), 126 to 146 (PIYP…PFPW), 177 to 197 (FIVS…YIFG), 217 to 237 (GTFF…LQCL), 252 to 272 (LLSA…AIIH), 285 to 305 (GYLF…TFLW), and 326 to 346 (FPMF…VTWS). An EXS domain is found at 212-387 (DLKCDGTFFV…LFFHLDAISS (176 aa)).

The protein belongs to the ERD1 family.

It localises to the membrane. This is Protein ERD1 homolog 2 from Schizosaccharomyces pombe (strain 972 / ATCC 24843) (Fission yeast).